The sequence spans 242 residues: Small ribosomal subunit protein uS2 (242 aa).

Belongs to the universal ribosomal protein uS2 family.

The chain is Small ribosomal subunit protein uS2 from Shewanella sediminis (strain HAW-EB3).